The primary structure comprises 430 residues: Tyrosine--tRNA ligase (430 aa).

Tyrosine 32 contributes to the L-tyrosine binding site. A 'HIGH' region motif is present at residues 37 to 46 (PTADSLHIGH). 2 residues coordinate L-tyrosine: tyrosine 172 and glutamine 176. The short motif at 232 to 236 (KFGKT) is the 'KMSKS' region element. Lysine 235 lines the ATP pocket. An S4 RNA-binding domain is found at 362-429 (VKAVDLFVDN…GKKNYYLIIA (68 aa)).

This sequence belongs to the class-I aminoacyl-tRNA synthetase family. TyrS type 1 subfamily. Homodimer.

Its subcellular location is the cytoplasm. The enzyme catalyses tRNA(Tyr) + L-tyrosine + ATP = L-tyrosyl-tRNA(Tyr) + AMP + diphosphate + H(+). Catalyzes the attachment of tyrosine to tRNA(Tyr) in a two-step reaction: tyrosine is first activated by ATP to form Tyr-AMP and then transferred to the acceptor end of tRNA(Tyr). The sequence is that of Tyrosine--tRNA ligase from Bacteroides fragilis (strain ATCC 25285 / DSM 2151 / CCUG 4856 / JCM 11019 / LMG 10263 / NCTC 9343 / Onslow / VPI 2553 / EN-2).